Consider the following 323-residue polypeptide: GDP-mannose 4,6-dehydratase (323 aa).

Residues 11-14 (TGQD), Arg36, 59-60 (DM), and 81-85 (LAAQS) each bind NADP(+). Residue Thr126 is part of the active site. Active-site nucleophile residues include Glu128 and Tyr150. Residues Lys154, His180, and Arg185 each coordinate NADP(+).

Belongs to the NAD(P)-dependent epimerase/dehydratase family. GDP-mannose 4,6-dehydratase subfamily. In terms of assembly, homotetramer. NADP(+) serves as cofactor.

The catalysed reaction is GDP-alpha-D-mannose = GDP-4-dehydro-alpha-D-rhamnose + H2O. Its pathway is bacterial outer membrane biogenesis; lipopolysaccharide biosynthesis. Functionally, catalyzes the conversion of GDP-D-mannose to GDP-4-dehydro-6-deoxy-D-mannose. The polypeptide is GDP-mannose 4,6-dehydratase (Pseudomonas aeruginosa (strain ATCC 15692 / DSM 22644 / CIP 104116 / JCM 14847 / LMG 12228 / 1C / PRS 101 / PAO1)).